The sequence spans 112 residues: Inner membrane assembly complex subunit 17 (112 aa).

The transit peptide at 1-24 (MLRKLPINFAKWTVKKVPVQQKRF) directs the protein to the mitochondrion. Residues 25 to 44 (NSQQKEISPHIMFYKNYARP) lie on the Mitochondrial matrix side of the membrane. A helical membrane pass occupies residues 45 to 62 (LGKVTLFALATYYGLEIV). The Mitochondrial intermembrane portion of the chain corresponds to 63–112 (WWKLDASEQEAIKNSKLLICESSFSLLTFRRITEFRECEIKTRDLYDPEI).

It belongs to the INA17 family. Component of the inner membrane assembly (INA) complex. Interacts with a subset of F(1)F(0)-ATP synthase subunits of the F(1)-domain and the peripheral stalk.

The protein resides in the mitochondrion inner membrane. Component of the INA complex (INAC) that promotes the biogenesis of mitochondrial F(1)F(0)-ATP synthase. INAC facilitates the assembly of the peripheral stalk and promotes the assembly of the catalytic F(1)-domain with the membrane-embedded F(0)-domain. The sequence is that of Inner membrane assembly complex subunit 17 from Schizosaccharomyces pombe (strain 972 / ATCC 24843) (Fission yeast).